The following is a 326-amino-acid chain: Glutamine synthetase (326 aa).

Residues 4–85 form the GS beta-grasp domain; that stretch reads FKLEYIWLDG…VMCEVMMPDG (82 aa). In terms of domain architecture, GS catalytic spans 83–326; the sequence is PDGHAHASNA…GDPYQIVRRF (244 aa). Mg(2+) contacts are provided by Glu-107 and Glu-109. Glu-164 provides a ligand contact to ATP. Residues Glu-169 and Glu-176 each contribute to the Mg(2+) site. L-glutamate is bound at residue Glu-275.

It belongs to the glutamine synthetase family. In terms of assembly, homooctamer and homotetramer. Requires Mg(2+) as cofactor.

Its subcellular location is the cytoplasm. The enzyme catalyses L-glutamate + NH4(+) + ATP = L-glutamine + ADP + phosphate + H(+). Its activity is regulated as follows. Transferase activity is inhibited by NH(4)Cl. Its function is as follows. Catalyzes the ATP-dependent biosynthesis of glutamine from glutamate and ammonia. This is Glutamine synthetase from Rhizobium leguminosarum bv. phaseoli.